Reading from the N-terminus, the 251-residue chain is Protein TK1472 (251 aa).

It belongs to the CinA family.

The protein is Protein TK1472 of Thermococcus kodakarensis (strain ATCC BAA-918 / JCM 12380 / KOD1) (Pyrococcus kodakaraensis (strain KOD1)).